The following is an 83-amino-acid chain: Small ribosomal subunit protein bS16 (83 aa).

This sequence belongs to the bacterial ribosomal protein bS16 family.

This chain is Small ribosomal subunit protein bS16, found in Pseudomonas entomophila (strain L48).